The primary structure comprises 312 residues: Glycine--tRNA ligase alpha subunit (312 aa).

Belongs to the class-II aminoacyl-tRNA synthetase family. As to quaternary structure, tetramer of two alpha and two beta subunits.

It is found in the cytoplasm. It carries out the reaction tRNA(Gly) + glycine + ATP = glycyl-tRNA(Gly) + AMP + diphosphate. The protein is Glycine--tRNA ligase alpha subunit of Thiobacillus denitrificans (strain ATCC 25259 / T1).